Here is a 570-residue protein sequence, read N- to C-terminus: Dihydroxy-acid dehydratase (570 aa).

A disordered region spans residues 1-25 (MSQQDSPANADHRRRHSSIVVDGPG). C60 is a [2Fe-2S] cluster binding site. D92 provides a ligand contact to Mg(2+). C133 serves as a coordination point for [2Fe-2S] cluster. Mg(2+) contacts are provided by D134 and K135. Position 135 is an N6-carboxylysine (K135). A [2Fe-2S] cluster-binding site is contributed by C202. E453 provides a ligand contact to Mg(2+). S479 serves as the catalytic Proton acceptor.

The protein belongs to the IlvD/Edd family. In terms of assembly, homodimer. It depends on [2Fe-2S] cluster as a cofactor. Requires Mg(2+) as cofactor.

It catalyses the reaction (2R)-2,3-dihydroxy-3-methylbutanoate = 3-methyl-2-oxobutanoate + H2O. The catalysed reaction is (2R,3R)-2,3-dihydroxy-3-methylpentanoate = (S)-3-methyl-2-oxopentanoate + H2O. It functions in the pathway amino-acid biosynthesis; L-isoleucine biosynthesis; L-isoleucine from 2-oxobutanoate: step 3/4. It participates in amino-acid biosynthesis; L-valine biosynthesis; L-valine from pyruvate: step 3/4. Functions in the biosynthesis of branched-chain amino acids. Catalyzes the dehydration of (2R,3R)-2,3-dihydroxy-3-methylpentanoate (2,3-dihydroxy-3-methylvalerate) into 2-oxo-3-methylpentanoate (2-oxo-3-methylvalerate) and of (2R)-2,3-dihydroxy-3-methylbutanoate (2,3-dihydroxyisovalerate) into 2-oxo-3-methylbutanoate (2-oxoisovalerate), the penultimate precursor to L-isoleucine and L-valine, respectively. The protein is Dihydroxy-acid dehydratase of Chromohalobacter salexigens (strain ATCC BAA-138 / DSM 3043 / CIP 106854 / NCIMB 13768 / 1H11).